Consider the following 174-residue polypeptide: Transcriptional repressor NrdR (174 aa).

Residues 3–34 (CPFCQHNDTRVIDSRVSEDGTTIRRRRECEAC) fold into a zinc finger. One can recognise an ATP-cone domain in the interval 49–139 (PTVVKSDGGR…VYRSFQDVAD (91 aa)).

This sequence belongs to the NrdR family. Zn(2+) serves as cofactor.

Functionally, negatively regulates transcription of bacterial ribonucleotide reductase nrd genes and operons by binding to NrdR-boxes. The chain is Transcriptional repressor NrdR from Xanthomonas campestris pv. campestris (strain 8004).